The chain runs to 31 residues: Cyclotide vinc-B (31 aa).

Positions Gly-1–Asn-31 form a cross-link, cyclopeptide (Gly-Asn). 3 disulfide bridges follow: Cys-6/Cys-20, Cys-10/Cys-22, and Cys-15/Cys-28.

The protein belongs to the cyclotide family. Post-translationally, this is a cyclic peptide.

Its function is as follows. Probably participates in a plant defense mechanism. This chain is Cyclotide vinc-B, found in Viola inconspicua.